The primary structure comprises 122 residues: EPIDERMAL PATTERNING FACTOR-like protein 1 (122 aa).

A signal peptide spans 1 to 26; the sequence is MFAIYKSTLLLLPLILILLITPQVSS. Disulfide bonds link C55-C113, C59-C65, and C62-C115.

It belongs to the plant cysteine rich small secretory peptide family. Epidermal patterning factor subfamily.

It localises to the secreted. Functionally, controls stomatal patterning. The polypeptide is EPIDERMAL PATTERNING FACTOR-like protein 1 (Arabidopsis thaliana (Mouse-ear cress)).